Here is a 397-residue protein sequence, read N- to C-terminus: Ribosomal RNA large subunit methyltransferase I (397 aa).

Residues 2-80 (AIRIKLKPGR…KEETIDADFF (79 aa)) form the PUA domain.

This sequence belongs to the methyltransferase superfamily. RlmI family.

The protein localises to the cytoplasm. The enzyme catalyses cytidine(1962) in 23S rRNA + S-adenosyl-L-methionine = 5-methylcytidine(1962) in 23S rRNA + S-adenosyl-L-homocysteine + H(+). In terms of biological role, specifically methylates the cytosine at position 1962 (m5C1962) of 23S rRNA. The sequence is that of Ribosomal RNA large subunit methyltransferase I from Shewanella frigidimarina (strain NCIMB 400).